The chain runs to 128 residues: Leucine-rich single-pass membrane protein 1 (128 aa).

Serine 24 carries the phosphoserine modification. Residues 66–86 (GLLLVLTVSLALVFFAIFLII) form a helical membrane-spanning segment. A coiled-coil region spans residues 90–111 (NQMEDVSRRLTAEGKDIDDLKK).

It localises to the membrane. The polypeptide is Leucine-rich single-pass membrane protein 1 (Lsmem1) (Mus musculus (Mouse)).